The primary structure comprises 345 residues: Phosphoribosylformylglycinamidine cyclo-ligase (345 aa).

The protein belongs to the AIR synthase family.

The protein resides in the cytoplasm. It carries out the reaction 2-formamido-N(1)-(5-O-phospho-beta-D-ribosyl)acetamidine + ATP = 5-amino-1-(5-phospho-beta-D-ribosyl)imidazole + ADP + phosphate + H(+). It participates in purine metabolism; IMP biosynthesis via de novo pathway; 5-amino-1-(5-phospho-D-ribosyl)imidazole from N(2)-formyl-N(1)-(5-phospho-D-ribosyl)glycinamide: step 2/2. The polypeptide is Phosphoribosylformylglycinamidine cyclo-ligase (Aeromonas hydrophila subsp. hydrophila (strain ATCC 7966 / DSM 30187 / BCRC 13018 / CCUG 14551 / JCM 1027 / KCTC 2358 / NCIMB 9240 / NCTC 8049)).